A 419-amino-acid chain; its full sequence is Tol-Pal system protein TolB (419 aa).

The N-terminal stretch at 1-19 (MFNRIISLFLLLFTGQVIA) is a signal peptide.

The protein belongs to the TolB family. As to quaternary structure, the Tol-Pal system is composed of five core proteins: the inner membrane proteins TolA, TolQ and TolR, the periplasmic protein TolB and the outer membrane protein Pal. They form a network linking the inner and outer membranes and the peptidoglycan layer.

It is found in the periplasm. Its function is as follows. Part of the Tol-Pal system, which plays a role in outer membrane invagination during cell division and is important for maintaining outer membrane integrity. The chain is Tol-Pal system protein TolB from Legionella pneumophila subsp. pneumophila (strain Philadelphia 1 / ATCC 33152 / DSM 7513).